We begin with the raw amino-acid sequence, 184 residues long: Peptide deformylase (184 aa).

Fe cation is bound by residues cysteine 96 and histidine 138. Residue glutamate 139 is part of the active site. Histidine 142 serves as a coordination point for Fe cation.

The protein belongs to the polypeptide deformylase family. Fe(2+) is required as a cofactor.

The catalysed reaction is N-terminal N-formyl-L-methionyl-[peptide] + H2O = N-terminal L-methionyl-[peptide] + formate. Removes the formyl group from the N-terminal Met of newly synthesized proteins. Requires at least a dipeptide for an efficient rate of reaction. N-terminal L-methionine is a prerequisite for activity but the enzyme has broad specificity at other positions. The polypeptide is Peptide deformylase (Cytophaga hutchinsonii (strain ATCC 33406 / DSM 1761 / CIP 103989 / NBRC 15051 / NCIMB 9469 / D465)).